Consider the following 406-residue polypeptide: Tryptophan synthase beta chain (406 aa).

N6-(pyridoxal phosphate)lysine is present on Lys99.

It belongs to the TrpB family. As to quaternary structure, tetramer of two alpha and two beta chains. Pyridoxal 5'-phosphate is required as a cofactor.

The catalysed reaction is (1S,2R)-1-C-(indol-3-yl)glycerol 3-phosphate + L-serine = D-glyceraldehyde 3-phosphate + L-tryptophan + H2O. It participates in amino-acid biosynthesis; L-tryptophan biosynthesis; L-tryptophan from chorismate: step 5/5. The beta subunit is responsible for the synthesis of L-tryptophan from indole and L-serine. The sequence is that of Tryptophan synthase beta chain from Brucella abortus (strain 2308).